A 340-amino-acid chain; its full sequence is S-adenosylmethionine:tRNA ribosyltransferase-isomerase (340 aa).

Belongs to the QueA family. Monomer.

The protein resides in the cytoplasm. It catalyses the reaction 7-aminomethyl-7-carbaguanosine(34) in tRNA + S-adenosyl-L-methionine = epoxyqueuosine(34) in tRNA + adenine + L-methionine + 2 H(+). It functions in the pathway tRNA modification; tRNA-queuosine biosynthesis. Functionally, transfers and isomerizes the ribose moiety from AdoMet to the 7-aminomethyl group of 7-deazaguanine (preQ1-tRNA) to give epoxyqueuosine (oQ-tRNA). The polypeptide is S-adenosylmethionine:tRNA ribosyltransferase-isomerase (Nitratiruptor sp. (strain SB155-2)).